Consider the following 249-residue polypeptide: 1-(5-phosphoribosyl)-5-[(5-phosphoribosylamino)methylideneamino] imidazole-4-carboxamide isomerase (249 aa).

The Proton acceptor role is filled by D10. The Proton donor role is filled by D131.

This sequence belongs to the HisA/HisF family.

It is found in the cytoplasm. The enzyme catalyses 1-(5-phospho-beta-D-ribosyl)-5-[(5-phospho-beta-D-ribosylamino)methylideneamino]imidazole-4-carboxamide = 5-[(5-phospho-1-deoxy-D-ribulos-1-ylimino)methylamino]-1-(5-phospho-beta-D-ribosyl)imidazole-4-carboxamide. It functions in the pathway amino-acid biosynthesis; L-histidine biosynthesis; L-histidine from 5-phospho-alpha-D-ribose 1-diphosphate: step 4/9. The protein is 1-(5-phosphoribosyl)-5-[(5-phosphoribosylamino)methylideneamino] imidazole-4-carboxamide isomerase of Brevibacillus brevis (strain 47 / JCM 6285 / NBRC 100599).